Here is a 141-residue protein sequence, read N- to C-terminus: Hemoglobin subunit alpha-2 (141 aa).

A Globin domain is found at 1–141 (VLSSQDKANV…VKHVLTSKYR (141 aa)). An O2-binding site is contributed by H58. A heme b-binding site is contributed by H87.

It belongs to the globin family. In terms of assembly, minor hemoglobin is a heterotetramer of two alpha-2 chains and two beta-2 chains. In terms of tissue distribution, red blood cells.

Its function is as follows. Involved in oxygen transport from the lung to the various peripheral tissues. This chain is Hemoglobin subunit alpha-2, found in Triturus cristatus (Great crested newt).